The following is a 437-amino-acid chain: Aspartate--tRNA(Asp/Asn) ligase (437 aa).

Glu175 contributes to the L-aspartate binding site. Residues 197-200 are aspartate; it reads QLYK. Arg219 contributes to the L-aspartate binding site. ATP is bound by residues 219-221, 227-229, and Glu360; these read RAE and RHL. Glu360 and Ser363 together coordinate Mg(2+). L-aspartate-binding residues include Ser363 and Arg367. Position 408–411 (408–411) interacts with ATP; it reads GAER.

The protein belongs to the class-II aminoacyl-tRNA synthetase family. Type 2 subfamily. As to quaternary structure, homodimer. It depends on Mg(2+) as a cofactor.

The protein localises to the cytoplasm. The catalysed reaction is tRNA(Asx) + L-aspartate + ATP = L-aspartyl-tRNA(Asx) + AMP + diphosphate. Aspartyl-tRNA synthetase with relaxed tRNA specificity since it is able to aspartylate not only its cognate tRNA(Asp) but also tRNA(Asn). Reaction proceeds in two steps: L-aspartate is first activated by ATP to form Asp-AMP and then transferred to the acceptor end of tRNA(Asp/Asn). The chain is Aspartate--tRNA(Asp/Asn) ligase from Methanothermobacter thermautotrophicus (strain ATCC 29096 / DSM 1053 / JCM 10044 / NBRC 100330 / Delta H) (Methanobacterium thermoautotrophicum).